Consider the following 419-residue polypeptide: UDP-N-acetylglucosamine 1-carboxyvinyltransferase 2 (419 aa).

Residue 24-25 (KN) participates in phosphoenolpyruvate binding. Residue R94 participates in UDP-N-acetyl-alpha-D-glucosamine binding. Residue C118 is the Proton donor of the active site. C118 is modified (2-(S-cysteinyl)pyruvic acid O-phosphothioketal). Residues 123–127 (RPIDQ), D307, and I329 each bind UDP-N-acetyl-alpha-D-glucosamine.

The protein belongs to the EPSP synthase family. MurA subfamily.

It localises to the cytoplasm. The enzyme catalyses phosphoenolpyruvate + UDP-N-acetyl-alpha-D-glucosamine = UDP-N-acetyl-3-O-(1-carboxyvinyl)-alpha-D-glucosamine + phosphate. The protein operates within cell wall biogenesis; peptidoglycan biosynthesis. In terms of biological role, cell wall formation. Adds enolpyruvyl to UDP-N-acetylglucosamine. The chain is UDP-N-acetylglucosamine 1-carboxyvinyltransferase 2 from Staphylococcus aureus (strain bovine RF122 / ET3-1).